The chain runs to 532 residues: NMDA receptor synaptonuclear signaling and neuronal migration factor (532 aa).

Residue Gly2 is the site of N-myristoyl glycine attachment. The interval 2–235 (GAAASRRRAL…FSFQTATTTM (234 aa)) is necessary and sufficient to elicit dendritic processes and synaptic contacts. Disordered regions lie at residues 34–67 (SQSH…APHN) and 127–174 (RRQR…GCAK). A compositionally biased stretch (basic and acidic residues) spans 38–48 (PENRNGADHLL). Residues 127–139 (RRQRERHPHHHSQ) are compositionally biased toward basic residues. Residues 155 to 164 (PCQSWAGSRQ) show a composition bias toward polar residues. Position 206 is a phosphoserine (Ser206). The short motif at 247-252 (RKRRKR) is the Nuclear localization signal element. The tract at residues 275–315 (RVKAQTFAERRERSFSRSWSDPTPMKADTSHDSRDSSDLQS) is disordered. Phosphoserine is present on residues Ser292 and Ser294. Positions 302-311 (DTSHDSRDSS) are enriched in basic and acidic residues.

This sequence belongs to the NSMF family. In terms of assembly, interacts with KPNA1; the interaction occurs in a calcium-independent manner after synaptic NMDA receptor stimulation and is required for nuclear import of NSMF but is competed by CABP1. Interacts (via the central NLS-containing motif region) with CABP1 (via EF-hands 1 and 2); the interaction occurs in a calcium-dependent manner after synaptic NMDA receptor stimulation and prevents the nuclear import of NSMF. Cannot be competed by calmodulin. In terms of processing, proteolytically processed after NMDA receptor activation. Cleaved in a calcium-dependent and calpain-sensitive manner. Calpain cleavage is essential for the translocation process from dendrites to the nucleus. Expressed in the radiatum and pyramidale strata of the hippocampus (at protein level). Strongly expressed in the brain. Expressed in the sensory and motor cortex, hippocampus, olfactory bulb, thalamus and amygdala. In the olfactory bulb expressed in the granular cell layer, mitral cell layer and the glomerular layer. In the hippocampus highly expressed in the regions associated with neuronal cell types as CA1, CA2, CA3 and granule cells of the dentate gyrus. All isoforms have been detected in the molecular layers of the hippocampus.

Its subcellular location is the nucleus. The protein resides in the nucleus envelope. It localises to the nucleus membrane. The protein localises to the nucleus matrix. It is found in the cytoplasm. Its subcellular location is the cell cortex. The protein resides in the cytoskeleton. It localises to the cell membrane. The protein localises to the cell projection. It is found in the dendrite. Its subcellular location is the synapse. The protein resides in the synaptosome. It localises to the postsynaptic density. The protein localises to the membrane. Couples NMDA-sensitive glutamate receptor signaling to the nucleus and triggers long-lasting changes in the cytoarchitecture of dendrites and spine synapse processes. Part of the cAMP response element-binding protein (CREB) shut-off signaling pathway. Stimulates outgrowth of olfactory axons and migration of gonadotropin-releasing hormone (GnRH) and luteinizing-hormone-releasing hormone (LHRH) neuronal cells. This Rattus norvegicus (Rat) protein is NMDA receptor synaptonuclear signaling and neuronal migration factor (Nsmf).